The following is a 310-amino-acid chain: MEPAGAGREGWDGTMGDDPRQSQMLEAIEDFCDYLILVVGRSDATVRGYRSDLRHMAATIPDLTEFTLPNLRAWLGRAVEEGKSRATLARRTASVKSFSTWAVKNGLISGDEAARLVSPKVTRNLPRVLGEVQAGEFMGSAAADTEDEFRRDSAILELLYATGMRVSELCGLDLGDVDHHRRMVRVLGKGDKERMIPFGKAAADALEQWLEARDRMAKVEDAMFVGVRGGRIDARQIRRIVDRTAQVAGADHLSPHSLRHTAATHLLDGGADLRQVQEMLGHSSLQTTQIYTHVSSQRLLEAFRQAHPRA.

Residues 22 to 103 (SQMLEAIEDF…SVKSFSTWAV (82 aa)) enclose the Core-binding (CB) domain. The Tyr recombinase domain occupies 124–304 (NLPRVLGEVQ…SSQRLLEAFR (181 aa)). Residues Arg-165, Lys-189, His-256, Arg-259, and His-282 contribute to the active site. Catalysis depends on Tyr-291, which acts as the O-(3'-phospho-DNA)-tyrosine intermediate.

This sequence belongs to the 'phage' integrase family. XerC subfamily. In terms of assembly, forms a cyclic heterotetrameric complex composed of two molecules of XerC and two molecules of XerD.

It is found in the cytoplasm. In terms of biological role, site-specific tyrosine recombinase, which acts by catalyzing the cutting and rejoining of the recombining DNA molecules. The XerC-XerD complex is essential to convert dimers of the bacterial chromosome into monomers to permit their segregation at cell division. It also contributes to the segregational stability of plasmids. The chain is Tyrosine recombinase XerC from Corynebacterium efficiens (strain DSM 44549 / YS-314 / AJ 12310 / JCM 11189 / NBRC 100395).